The chain runs to 996 residues: Phototropin-1 (996 aa).

The tract at residues 1 to 184 is disordered; sequence MEPTEKPSTK…PGGRSGIPRV (184 aa). A phosphoserine mark is found at Ser23 and Ser58. Over residues 49 to 59 the composition is skewed to polar residues; it reads QNLSDPRGTSP. Residues 60-70 show a composition bias toward pro residues; it reads QPRPQQEPAPS. Residues 141–153 are compositionally biased toward polar residues; it reads SGGTENDPNGKKT. Over residues 155-166 the composition is skewed to low complexity; the sequence is SQRNSQNSCRSS. Residues 184-257 enclose the PAS 1 domain; sequence VSEDLKDALS…AKIRETLAAG (74 aa). At Ser185 the chain carries Phosphoserine. Asn233 provides a ligand contact to FMN. At Cys234 the chain carries S-4a-FMN cysteine. FMN contacts are provided by Arg235, Gln238, Arg251, Asn266, Asn276, Gln297, and Lys302. One can recognise a PAC 1 domain in the interval 258-312; it reads NNYCGRILNYKKDGTSFWNLLTIAPIKDESGKVLKFIGMQVEVSKHTEGAKEKAL. Phosphoserine occurs at positions 350, 376, and 410. Disordered regions lie at residues 351–413 and 434–453; these read ESTN…SLSF and YGEE…SVDD. Residues 434 to 443 are compositionally biased toward acidic residues; it reads YGEEDDEISD. Residues 444-453 are compositionally biased toward basic and acidic residues; sequence RDERPESVDD. Ser450 carries the phosphoserine modification. The PAS 2 domain maps to 462-535; sequence KGIDLATTLE…KKIRNAIDNQ (74 aa). Asn511 provides a ligand contact to FMN. Cys512 carries the S-4a-FMN cysteine modification. Positions 513, 516, 529, 544, 554, 556, and 575 each coordinate FMN. The 55-residue stretch at 536–590 folds into the PAC 2 domain; that stretch reads TEVTVQLINYTKSGKKFWNIFHLQPMRDQKGEVQYFIGVQLDGSKHVEPVRNVIE. The region spanning 663–952 is the Protein kinase domain; sequence FKPVKPLGSG…ANEVKQHSFF (290 aa). ATP contacts are provided by residues 669–677 and Lys692; that span reads LGSGDTGSV. Asp788 serves as the catalytic Proton acceptor. The interval 806–862 is activation loop; the sequence is DFDLSCLTSCKPQLLIPSIDEKKKKKQQKSQQTPIFMAEPMRASNSFVGTEEYIAPE.

This sequence belongs to the protein kinase superfamily. AGC Ser/Thr protein kinase family. Homodimer; disulfide-linked. Interacts with PKS1, PKS2, RPT2, RPT3, PHOT2 and BLUS1. Subunit of a complex made of CAR6, PHOT1 and RPT3/NPH3. Associates with CBC1 and CBC2. Binds to BHP. FMN is required as a cofactor. In terms of processing, autophosphorylated at Ser-185, Ser-350 and Ser-410 in response to blue light irradiation. 2 molecules of FMN bind covalently to cysteines after exposure to blue light and are reversed in the dark. Present in guard cells (at protein level).

Its subcellular location is the cell membrane. The protein localises to the cytoplasm. The enzyme catalyses L-seryl-[protein] + ATP = O-phospho-L-seryl-[protein] + ADP + H(+). The catalysed reaction is L-threonyl-[protein] + ATP = O-phospho-L-threonyl-[protein] + ADP + H(+). Its activity is regulated as follows. Autophosphorylation is inhibited by staurosporine, but not by tyrphostin 9, sphingosine, GW5074 and BML-265. In terms of biological role, protein kinase that acts as a blue light (BL) photoreceptor in a signal-transduction pathway for photo-induced movements. Triggers the phosphorylation of AHA1 and AHA2 C-terminal penultimate Thr in guard cells to activate them and induce stomatal opening in response to blue light (BL). Also phosphorylates BLUS1, a kinase involved in stomatal opening. Mediates the phosphorylation of CBC1 in stomata, but not of CBC2, in response to blue light. Required for blue light mediated mRNA destabilization. Mediates calcium spiking of extracellular origin in response to a low rate of blue light. Also mediates rapid membrane depolarization and growth inhibition in response to blue light. Necessary for root phototropism. Involved in hypocotyl phototropism under a low rate but not under a high rate of blue light. Contributes to the chloroplast accumulation but seems not to be required for chloroplast translocation. Regulates stomata opening and photomorphogenesis response of leaf tissue. Confers sensitivity to drought. Not involved in hypocotyl elongation inhibition, anthocyanin accumulation or cotyledon opening. Involved in the regulation of leaf position and morphology via the phosphorylation of ABCB19 during blue light responses to modulate auxin distribution. The polypeptide is Phototropin-1 (Arabidopsis thaliana (Mouse-ear cress)).